We begin with the raw amino-acid sequence, 180 residues long: Negative modulator of initiation of replication (180 aa).

An interaction with DNA region spans residues alanine 87–valine 88.

Belongs to the SeqA family. As to quaternary structure, homodimer. Polymerizes to form helical filaments.

Its subcellular location is the cytoplasm. Functionally, negative regulator of replication initiation, which contributes to regulation of DNA replication and ensures that replication initiation occurs exactly once per chromosome per cell cycle. Binds to pairs of hemimethylated GATC sequences in the oriC region, thus preventing assembly of replication proteins and re-initiation at newly replicated origins. Repression is relieved when the region becomes fully methylated. This is Negative modulator of initiation of replication from Ferrimonas balearica (strain DSM 9799 / CCM 4581 / KCTC 23876 / PAT).